We begin with the raw amino-acid sequence, 570 residues long: Protein HEATR9 (570 aa).

In Homo sapiens (Human), this protein is Protein HEATR9 (HEATR9).